Consider the following 348-residue polypeptide: MSFAIAVSPHGHSQKSTSSVMRLTLLALVPGIAAQCYLFGWGVLFQLGLAILTALVSEAVILRMRNYVVSASLKDSSALLTAALIAVAIPPLLPWWMVVLATAFAIIIAKQLYGGLGQNPFNPAMVGYVLLLVSFPAPMTNWMAPQAVTAQLLSPAETAAVIFQGKTSEGLTNYQLKTLVDGSTMATPLDHLKTESKRGHSVDTLVTSANFTAVSHEGWRWINLSFLAGGILLFMLRLIPWQTPVAMLGTLAAASALAHYLAPAQFAMPEIELLSGATMLGAFFIITDPVTSSTTSRGRLVFGALVGGLVFIIRHFGGYPDGVAFSVLLCNILVPLIDKYSQSRVYGH.

A run of 3 helical transmembrane segments spans residues 20 to 39 (VMRL…CYLF), 67 to 87 (YVVS…LIAV), and 124 to 144 (AMVG…NWMA). T187 is modified (FMN phosphoryl threonine). Transmembrane regions (helical) follow at residues 221–241 (WINL…LIPW), 244–264 (PVAM…LAPA), 266–286 (FAMP…FFII), and 300–320 (LVFG…GGYP).

The protein belongs to the NqrB/RnfD family. As to quaternary structure, the complex is composed of six subunits: RnfA, RnfB, RnfC, RnfD, RnfE and RnfG. Requires FMN as cofactor.

The protein localises to the cell inner membrane. Its function is as follows. Part of a membrane-bound complex that couples electron transfer with translocation of ions across the membrane. This chain is Ion-translocating oxidoreductase complex subunit D, found in Tolumonas auensis (strain DSM 9187 / NBRC 110442 / TA 4).